Reading from the N-terminus, the 212-residue chain is Ras-related protein Rab-17 (212 aa).

Ser-29 carries the post-translational modification Phosphoserine. The GTP site is built by Gly-31, Lys-32, Ser-33, and Thr-50. Residues Ser-33, Thr-50, and Asp-73 each coordinate Mg(2+). Positions 43–54 (DFKSILPTVGCA) match the Switch 1 motif. The Switch 2 signature appears at 75 to 91 (AGQEKYHSVCHLYFRGA). Residues Gly-76, Asn-132, Lys-133, Asp-135, and Ala-163 each coordinate GTP. Residues Cys-209 and Cys-210 are each lipidated (S-geranylgeranyl cysteine).

This sequence belongs to the small GTPase superfamily. Rab family. The cofactor is Mg(2+). As to expression, expressed in melanocytes (at protein level).

Its subcellular location is the recycling endosome membrane. The protein localises to the melanosome. The protein resides in the cell projection. It is found in the dendrite. The enzyme catalyses GTP + H2O = GDP + phosphate + H(+). Regulated by guanine nucleotide exchange factors (GEFs) which promote the exchange of bound GDP for free GTP. Regulated by GTPase activating proteins (GAPs) which increase the GTP hydrolysis activity. Inhibited by GDP dissociation inhibitors (GDIs). Its function is as follows. The small GTPases Rab are key regulators of intracellular membrane trafficking, from the formation of transport vesicles to their fusion with membranes. Rabs cycle between an inactive GDP-bound form and an active GTP-bound form that is able to recruit to membranes different set of downstream effectors directly responsible for vesicle formation, movement, tethering and fusion. RAB17 is involved in transcytosis, the directed movement of endocytosed material through the cell and its exocytosis from the plasma membrane at the opposite side. Mainly observed in epithelial cells, transcytosis mediates for instance, the transcellular transport of immunoglobulins from the basolateral surface to the apical surface. Most probably controls membrane trafficking through apical recycling endosomes in a post-endocytic step of transcytosis. Required for melanosome transport and release from melanocytes, it also regulates dendrite and dendritic spine development. May also play a role in cell migration. The polypeptide is Ras-related protein Rab-17 (Homo sapiens (Human)).